The sequence spans 315 residues: Homoserine kinase (315 aa).

ATP is bound at residue 97–107 (PPARGLGSSAT).

Belongs to the GHMP kinase family. Homoserine kinase subfamily.

It localises to the cytoplasm. The catalysed reaction is L-homoserine + ATP = O-phospho-L-homoserine + ADP + H(+). It participates in amino-acid biosynthesis; L-threonine biosynthesis; L-threonine from L-aspartate: step 4/5. Catalyzes the ATP-dependent phosphorylation of L-homoserine to L-homoserine phosphate. The sequence is that of Homoserine kinase from Prochlorococcus marinus subsp. pastoris (strain CCMP1986 / NIES-2087 / MED4).